We begin with the raw amino-acid sequence, 88 residues long: Small ribosomal subunit protein bS16 (88 aa).

The protein belongs to the bacterial ribosomal protein bS16 family.

In Leptospira borgpetersenii serovar Hardjo-bovis (strain L550), this protein is Small ribosomal subunit protein bS16.